A 246-amino-acid chain; its full sequence is Sensory transduction protein LytT (246 aa).

The Response regulatory domain occupies 3–117; sequence KVLVVDDEML…RIVQTLKKYK (115 aa). The 105-residue stretch at 142 to 246 folds into the HTH LytTR-type domain; sequence LALPIEESIV…AKELKKLLRI (105 aa).

In terms of processing, phosphorylated by LytS.

It localises to the cytoplasm. Member of the two-component regulatory system LytS/LytT that probably regulates genes involved in cell wall metabolism. The sequence is that of Sensory transduction protein LytT (lytT) from Bacillus cereus (strain ATCC 14579 / DSM 31 / CCUG 7414 / JCM 2152 / NBRC 15305 / NCIMB 9373 / NCTC 2599 / NRRL B-3711).